Consider the following 217-residue polypeptide: UPF0323 lipoprotein HPSH_01205 (217 aa).

The N-terminal stretch at Met1 to Gly27 is a signal peptide. The N-palmitoyl cysteine moiety is linked to residue Cys28. Cys28 carries the S-diacylglycerol cysteine lipid modification. A compositionally biased stretch (polar residues) spans Gln160–Arg171. Positions Gln160–Ser217 are disordered. Residues Ser172–Ser210 show a composition bias toward low complexity.

It belongs to the UPF0323 family.

The protein localises to the cell membrane. This is UPF0323 lipoprotein HPSH_01205 from Helicobacter pylori (strain Shi470).